The primary structure comprises 476 residues: Probable isoprenylcysteine alpha-carbonyl methylesterase ICMEL1 (476 aa).

The span at Asn92 to Thr104 shows a compositional bias: polar residues. The segment at Asn92–Thr116 is disordered. Transmembrane regions (helical) follow at residues Phe153–Tyr173 and Val208–Leu228. Substrate contacts are provided by residues Gly214–Ala216 and Gln285–Ala287. Catalysis depends on residues Ser286, Asp388, and His420.

The protein belongs to the AB hydrolase superfamily. Isoprenylcysteine methylesterase family. In terms of tissue distribution, expressed in roots, rosette and cauline leaves, stems, flowers and siliques.

It localises to the endoplasmic reticulum membrane. It is found in the golgi apparatus membrane. It carries out the reaction [protein]-C-terminal S-[(2E,6E)-farnesyl]-L-cysteine methyl ester + H2O = [protein]-C-terminal S-[(2E,6E)-farnesyl]-L-cysteine + methanol + H(+). Catalyzes the demethylation of isoprenylcysteine methylesters. May be involved in the regulation of ABA signaling. The sequence is that of Probable isoprenylcysteine alpha-carbonyl methylesterase ICMEL1 from Arabidopsis thaliana (Mouse-ear cress).